The sequence spans 155 residues: UBA-like domain-containing protein 1 (155 aa).

The tract at residues 81–155 (KASESFNSSS…KASAAMEAER (75 aa)) is disordered. Positions 83-96 (SESFNSSSSPSMAT) are enriched in low complexity. Positions 112–127 (ANQQSLWTQGPSAQQT) are enriched in polar residues. Low complexity predominate over residues 139 to 155 (QQAASEQKASAAMEAER).

The protein belongs to the UBALD family.

The sequence is that of UBA-like domain-containing protein 1 (ubald1) from Danio rerio (Zebrafish).